The primary structure comprises 445 residues: Methionine aminopeptidase 2-1 (445 aa).

The disordered stretch occupies residues 1–86; the sequence is MAAQASEDLQ…VQSEPPRVPL (86 aa). The span at 34–46 shows a compositional bias: acidic residues; it reads GEAEDDSDDDADE. Over residues 59-74 the composition is skewed to basic residues; that stretch reads AKKKKKRKSKKKKKGG. H198 contacts substrate. A divalent metal cation-binding residues include D218, D229, and H298. H306 contributes to the substrate binding site. E331 and E426 together coordinate a divalent metal cation.

The protein belongs to the peptidase M24A family. Methionine aminopeptidase eukaryotic type 2 subfamily. The cofactor is Co(2+). Zn(2+) serves as cofactor. Requires Mn(2+) as cofactor. It depends on Fe(2+) as a cofactor.

Its subcellular location is the cytoplasm. It catalyses the reaction Release of N-terminal amino acids, preferentially methionine, from peptides and arylamides.. Cotranslationally removes the N-terminal methionine from nascent proteins. The N-terminal methionine is often cleaved when the second residue in the primary sequence is small and uncharged (Met-Ala-, Cys, Gly, Pro, Ser, Thr, or Val). The polypeptide is Methionine aminopeptidase 2-1 (Aspergillus flavus (strain ATCC 200026 / FGSC A1120 / IAM 13836 / NRRL 3357 / JCM 12722 / SRRC 167)).